The following is a 508-amino-acid chain: Photosystem II CP47 reaction center protein (508 aa).

The next 6 membrane-spanning stretches (helical) occupy residues Ser21–Ser36, Ile101–Trp115, Gly140–Phe156, Ile203–Ser218, Val237–Val252, and Thr457–Arg472.

This sequence belongs to the PsbB/PsbC family. PsbB subfamily. In terms of assembly, PSII is composed of 1 copy each of membrane proteins PsbA, PsbB, PsbC, PsbD, PsbE, PsbF, PsbH, PsbI, PsbJ, PsbK, PsbL, PsbM, PsbT, PsbX, PsbY, PsbZ, Psb30/Ycf12, at least 3 peripheral proteins of the oxygen-evolving complex and a large number of cofactors. It forms dimeric complexes. The cofactor is Binds multiple chlorophylls. PSII binds additional chlorophylls, carotenoids and specific lipids..

The protein resides in the plastid. It is found in the chloroplast thylakoid membrane. Its function is as follows. One of the components of the core complex of photosystem II (PSII). It binds chlorophyll and helps catalyze the primary light-induced photochemical processes of PSII. PSII is a light-driven water:plastoquinone oxidoreductase, using light energy to abstract electrons from H(2)O, generating O(2) and a proton gradient subsequently used for ATP formation. This chain is Photosystem II CP47 reaction center protein, found in Drimys granadensis.